Consider the following 634-residue polypeptide: Ankyrin repeat protein OPG025 (634 aa).

ANK repeat units follow at residues 36–69, 70–100, 103–134, 175–211, 307–337, and 412–441; these read DGETPLKAYVTKKNNNIKNDVVILLLSSVDYKNI, NDFDIFEYLCSDNIDIDLLKLLISKGIEINS, NGINIVEKYATTSNPNVDVFKLLLDKGIPTCS, MGKTVLYYYIITRSQDGYATSLDVINYLISHKKEMRY, IQDLLLEYVSYHTVYINVIKCMIDEGATLYR, and HGCSILYHCIKSHSVSLVEWLIDNGADINI.

It belongs to the orthopoxvirus OPG025 family. In terms of assembly, interacts with components of host SCF complex CUL1 and SKP1 and components of the cullin deneddylation/COP9 signalosome complex subunits COPS7A and COPS7B.

Plays a role in the inhibition of host immune repsonse by counteracting the action of interferons on early events in the viral replication cycle. This Vaccinia virus (strain Copenhagen) (VACV) protein is Ankyrin repeat protein OPG025 (OPG025).